Consider the following 440-residue polypeptide: Guanine/hypoxanthine permease PbuG (440 aa).

Helical transmembrane passes span 18–38 (IIGGLTTFLSMAYILFVNPIT), 57–77 (AVFTATALASAAGCILMGLIA), 81–101 (IAIAPGMGLNAFFAFSVVLGM), 107–127 (AALSGVFISGLIFVALSLTGF), 142–162 (AVGAGIGLFITFVGLQGSGII), 175–195 (IHSGPVLLTIFGVIVTVILMV), 201–221 (GVFIGMLLTAVAGMIFGLVPV), 251–271 (MLIVILTFLFVGFFDTAGTLV), 291–311 (ALLADSSSIVIGAVLGTSTTT), 327–347 (GFAAIVTGILFLLATFFSPLL), 354–374 (VTAPALIIVGALMVAPLGKIA), 388–408 (MIMMPLTYSIATGIAIGFIFY), and 419–439 (KEVHPIMYGLFVVFILYFIFL).

This sequence belongs to the nucleobase:cation symporter-2 (NCS2) (TC 2.A.40) family. Azg-like subfamily.

It localises to the cell membrane. Functionally, involved in the uptake of the purine bases hypoxanthine and guanine. The polypeptide is Guanine/hypoxanthine permease PbuG (pbuG) (Bacillus subtilis (strain 168)).